A 356-amino-acid chain; its full sequence is MPEEKQKKSVLEKALKRIEENFGKGSIMILGDETQVQPVEVIPTGSLAIDIATGVGGYPRGRIVEIFGQESSGKTTLALHAIAEAQKMGGVAAFIDAEHALDPVYAKNLGVDLKSLLISQPDHGEQALEIVDELVRSGVVDLIVVDSVAALVPRAEIEGAMGDMQVGLQARLMSQALRKIAGSVNKSKAVVIFTNQIRMKIGVMFGSPETTTGGLALKFYATMRMEVRRGEPIKEGKDVIGNVINVKIVKNKVAPPFKTAQTYIIYGKGIDREYELFNIAVNEGIVDRKGSWYYYTTLKGEEVSLGQGSSNAVQFLKDNPEIAGEIERRIREKYGLLSVEKEEQRKEKKSSGEEAS.

Position 68 to 75 (68 to 75 (GQESSGKT)) interacts with ATP.

The protein belongs to the RecA family.

The protein localises to the cytoplasm. Functionally, can catalyze the hydrolysis of ATP in the presence of single-stranded DNA, the ATP-dependent uptake of single-stranded DNA by duplex DNA, and the ATP-dependent hybridization of homologous single-stranded DNAs. It interacts with LexA causing its activation and leading to its autocatalytic cleavage. The chain is Protein RecA from Thermotoga sp. (strain RQ2).